The primary structure comprises 227 residues: Phosphoribosylformylglycinamidine synthase subunit PurQ (227 aa).

The region spanning 2 to 227 (RWAIVRFPGA…FLGLVKEVAR (226 aa)) is the Glutamine amidotransferase type-1 domain. The active-site Nucleophile is Cys85. Catalysis depends on residues His200 and Glu202.

As to quaternary structure, part of the FGAM synthase complex composed of 1 PurL, 1 PurQ and 2 PurS subunits.

The protein resides in the cytoplasm. It catalyses the reaction N(2)-formyl-N(1)-(5-phospho-beta-D-ribosyl)glycinamide + L-glutamine + ATP + H2O = 2-formamido-N(1)-(5-O-phospho-beta-D-ribosyl)acetamidine + L-glutamate + ADP + phosphate + H(+). The catalysed reaction is L-glutamine + H2O = L-glutamate + NH4(+). The protein operates within purine metabolism; IMP biosynthesis via de novo pathway; 5-amino-1-(5-phospho-D-ribosyl)imidazole from N(2)-formyl-N(1)-(5-phospho-D-ribosyl)glycinamide: step 1/2. Part of the phosphoribosylformylglycinamidine synthase complex involved in the purines biosynthetic pathway. Catalyzes the ATP-dependent conversion of formylglycinamide ribonucleotide (FGAR) and glutamine to yield formylglycinamidine ribonucleotide (FGAM) and glutamate. The FGAM synthase complex is composed of three subunits. PurQ produces an ammonia molecule by converting glutamine to glutamate. PurL transfers the ammonia molecule to FGAR to form FGAM in an ATP-dependent manner. PurS interacts with PurQ and PurL and is thought to assist in the transfer of the ammonia molecule from PurQ to PurL. The chain is Phosphoribosylformylglycinamidine synthase subunit PurQ from Thermus thermophilus (strain ATCC 27634 / DSM 579 / HB8).